Here is a 408-residue protein sequence, read N- to C-terminus: Arginine biosynthesis bifunctional protein ArgJ (408 aa).

Substrate is bound by residues threonine 156, lysine 182, threonine 193, glutamate 279, asparagine 403, and threonine 408. Threonine 193 (nucleophile) is an active-site residue.

The protein belongs to the ArgJ family. As to quaternary structure, heterotetramer of two alpha and two beta chains.

The protein localises to the cytoplasm. It catalyses the reaction N(2)-acetyl-L-ornithine + L-glutamate = N-acetyl-L-glutamate + L-ornithine. The enzyme catalyses L-glutamate + acetyl-CoA = N-acetyl-L-glutamate + CoA + H(+). It functions in the pathway amino-acid biosynthesis; L-arginine biosynthesis; L-ornithine and N-acetyl-L-glutamate from L-glutamate and N(2)-acetyl-L-ornithine (cyclic): step 1/1. The protein operates within amino-acid biosynthesis; L-arginine biosynthesis; N(2)-acetyl-L-ornithine from L-glutamate: step 1/4. Catalyzes two activities which are involved in the cyclic version of arginine biosynthesis: the synthesis of N-acetylglutamate from glutamate and acetyl-CoA as the acetyl donor, and of ornithine by transacetylation between N(2)-acetylornithine and glutamate. The polypeptide is Arginine biosynthesis bifunctional protein ArgJ (Methylococcus capsulatus (strain ATCC 33009 / NCIMB 11132 / Bath)).